The sequence spans 487 residues: MTVQTAQIVKNYIGGEWVESISTKMEAVYNPATGEVIAQVPLSTKVDVEQAVLAANEAFKSWSKTAVPKRARILFKYQQLLVDNWEDLAKLITIENGKSYNEAYGEVLRGIECVEFAAGAPTLMMGKQLPDIATGIESGMYRYPIGVIGGITPFNFPMMVPCWMFPLAIACGNTFVLKPSERTPLLAAKLVELAEEAGLPKGVLNIVNGAHDVVNGLLEHKLVKAISFVGSQPVAEYVYKKGTENLKRVQALAGAKNHSIVLSDANLELATKQIISAAFGSAGERCMAASVVTVQEEIADQLVGRLVEEANKIVIGNGLDEDVFLGPVIRDNHKERTIGYIDSGVEQGATLVRDGREDTAVKGAGYFVGPTIFDHVTQEMKIWQDEIFAPVLSIVRVKSLDEAIEIANESRFANGACIYTDSGASVRQFRETIESGMLGVNVGVPAPMAFFPFSGWKDSFYGDLHANGTDGVEFYTRKKMLTSRWEK.

Positions 154, 178, 181, 182, and 231 each coordinate NAD(+). Residue C286 is the Nucleophile of the active site. E386 contacts NAD(+).

This sequence belongs to the aldehyde dehydrogenase family. IolA subfamily. In terms of assembly, homotetramer.

The catalysed reaction is 3-oxopropanoate + NAD(+) + CoA + H2O = hydrogencarbonate + acetyl-CoA + NADH + H(+). It carries out the reaction 2-methyl-3-oxopropanoate + NAD(+) + CoA + H2O = propanoyl-CoA + hydrogencarbonate + NADH + H(+). It functions in the pathway polyol metabolism; myo-inositol degradation into acetyl-CoA; acetyl-CoA from myo-inositol: step 7/7. Catalyzes the oxidation of malonate semialdehyde (MSA) and methylmalonate semialdehyde (MMSA) into acetyl-CoA and propanoyl-CoA, respectively. Is involved in a myo-inositol catabolic pathway. Bicarbonate, and not CO2, is the end-product of the enzymatic reaction. In Bacillus cereus (strain ZK / E33L), this protein is Malonate-semialdehyde dehydrogenase 3.